A 589-amino-acid chain; its full sequence is Peptide transporter PTR_A (589 aa).

Positions 1–56 (MSETKPAANDLSNVPSASDSDKDNSLDKVHSLEKTGVHEDINKLPSSDLEQLEDDG) are disordered. The segment covering 19–42 (DSDKDNSLDKVHSLEKTGVHEDIN) has biased composition (basic and acidic residues). The next 4 helical transmembrane spans lie at 74 to 95 (IPLS…YYGL), 124 to 144 (ALSY…AWIA), 153 to 173 (AICI…ITSI), and 180 to 200 (NTSL…TGGV). The N-linked (GlcNAc...) asparagine glycan is linked to Asn233. The next 8 membrane-spanning stretches (helical) occupy residues 236–256 (IQNV…SVIA), 266–286 (FWAG…VLLL), 345–365 (VYAC…GQMI), 388–408 (INAI…YPFI), 420–440 (IFWG…LQHF), 467–487 (IAIQ…ASIT), 502–522 (SFIM…GIAL), and 533–553 (WTYT…YIIF).

The protein belongs to the major facilitator superfamily. Proton-dependent oligopeptide transporter (POT/PTR) (TC 2.A.17) family.

The protein localises to the cell membrane. It carries out the reaction a dipeptide(out) + H(+)(out) = a dipeptide(in) + H(+)(in). The enzyme catalyses an L-amino acid tripeptide(out) + H(+)(out) = an L-amino acid tripeptide(in) + H(+)(in). Its function is as follows. Peptide transporter that exploits the inwardly directed proton motive force to facilitate the cellular uptake of di/tripeptides. The chain is Peptide transporter PTR_A from Candidozyma auris (Yeast).